The sequence spans 218 residues: Guanylate kinase (218 aa).

Residues 17 to 196 (GVLLALSSPS…ALEKLNEILH (180 aa)) form the Guanylate kinase-like domain. 24 to 31 (SPSGAGKT) contributes to the ATP binding site.

This sequence belongs to the guanylate kinase family.

The protein localises to the cytoplasm. The enzyme catalyses GMP + ATP = GDP + ADP. Its function is as follows. Essential for recycling GMP and indirectly, cGMP. The polypeptide is Guanylate kinase (Maricaulis maris (strain MCS10) (Caulobacter maris)).